Here is a 147-residue protein sequence, read N- to C-terminus: 3-dehydroquinate dehydratase (147 aa).

The active-site Proton acceptor is the Tyr-23. The substrate site is built by Asn-74, His-80, and Asp-87. His-100 (proton donor) is an active-site residue. Residues 101–102 (IS) and Arg-111 contribute to the substrate site.

Belongs to the type-II 3-dehydroquinase family. In terms of assembly, homododecamer.

The catalysed reaction is 3-dehydroquinate = 3-dehydroshikimate + H2O. The protein operates within metabolic intermediate biosynthesis; chorismate biosynthesis; chorismate from D-erythrose 4-phosphate and phosphoenolpyruvate: step 3/7. Catalyzes a trans-dehydration via an enolate intermediate. This Bacillus pumilus (strain SAFR-032) protein is 3-dehydroquinate dehydratase.